The primary structure comprises 91 residues: Non-specific lipid-transfer protein 1 (91 aa).

4 disulfides stabilise this stretch: Cys-3/Cys-50, Cys-13/Cys-27, Cys-28/Cys-73, and Cys-48/Cys-87.

The protein belongs to the plant LTP family.

In terms of biological role, plant non-specific lipid-transfer proteins transfer phospholipids as well as galactolipids across membranes. May play a role in wax or cutin deposition in the cell walls of expanding epidermal cells and certain secretory tissues. In Prunus persica (Peach), this protein is Non-specific lipid-transfer protein 1.